The chain runs to 236 residues: UPF0502 protein BceJ2315_62050 (236 aa).

This sequence belongs to the UPF0502 family.

The chain is UPF0502 protein BceJ2315_62050 from Burkholderia cenocepacia (strain ATCC BAA-245 / DSM 16553 / LMG 16656 / NCTC 13227 / J2315 / CF5610) (Burkholderia cepacia (strain J2315)).